Consider the following 468-residue polypeptide: Alpha-N-acetylgalactosaminidase (468 aa).

The tat-type signal signal peptide spans 1-30 (MENTRRNFLKKVTAAGIGAAGLAVTDQAMA). NAD(+)-binding positions include 62–63 (SR), Asp84, 133–136 (WEWH), 154–155 (EV), and Asn183. Residue Tyr212 participates in substrate binding. 243 to 247 (AEAQW) contributes to the NAD(+) binding site. Residues Arg248, 260–263 (YPTH), and Tyr342 contribute to the substrate site. Residue Tyr260 participates in NAD(+) binding.

The protein belongs to the Gfo/Idh/MocA family. Glycosyl hydrolase 109 subfamily. NAD(+) is required as a cofactor. Post-translationally, predicted to be exported by the Tat system. The position of the signal peptide cleavage has not been experimentally proven.

It carries out the reaction Cleavage of non-reducing alpha-(1-&gt;3)-N-acetylgalactosamine residues from human blood group A and AB mucin glycoproteins, Forssman hapten and blood group A lacto series glycolipids.. Its function is as follows. Glycosidase that has specific alpha-N-acetylgalactosaminidase activity. The sequence is that of Alpha-N-acetylgalactosaminidase (nagA) from Tannerella forsythia (Bacteroides forsythus).